The following is a 602-amino-acid chain: Cholinesterase (602 aa).

A signal peptide spans 1–28 (MQSKGTIISIQFLLRFLLLWVLIGKSHT). The N-linked (GlcNAc...) asparagine glycan is linked to N85. An intrachain disulfide couples C93 to C120. A glycan (N-linked (GlcNAc...) asparagine) is linked at N134. A substrate-binding site is contributed by 144-145 (GG). The active-site Acyl-ester intermediate is S226. S226 bears the Phosphoserine mark. N-linked (GlcNAc...) asparagine glycosylation is found at N269 and N284. The cysteines at positions 280 and 291 are disulfide-linked. E353 serves as the catalytic Charge relay system. N-linked (GlcNAc...) asparagine glycosylation is present at N369. C428 and C547 are oxidised to a cystine. H466 (charge relay system) is an active-site residue. Residues N483, N509, N513, and N514 are each glycosylated (N-linked (GlcNAc...) asparagine).

It belongs to the type-B carboxylesterase/lipase family. Homotetramer; disulfide-linked. Dimer of dimers.

Its subcellular location is the secreted. It carries out the reaction an acylcholine + H2O = a carboxylate + choline + H(+). In terms of biological role, esterase with broad substrate specificity. Contributes to the inactivation of the neurotransmitter acetylcholine. Can degrade neurotoxic organophosphate esters. This chain is Cholinesterase (BCHE), found in Panthera tigris tigris (Bengal tiger).